The primary structure comprises 172 residues: Cystatin-like cysteine protease inhibitor EPIC4 (172 aa).

An N-terminal signal peptide occupies residues 1–17 (MRASLSILVAFPALAAA). The short motif at 71–75 (QVVAG) is the Secondary area of contact element. The disordered stretch occupies residues 129–172 (EAATASSSSTPAPTPASTSTSASSSEETMLQSSVQQRAMFSDFV). Residues 130–156 (AATASSSSTPAPTPASTSTSASSSEET) are compositionally biased toward low complexity. A compositionally biased stretch (polar residues) spans 157–166 (MLQSSVQQRA).

This sequence belongs to the cystatin family.

The protein localises to the secreted. In terms of biological role, secreted effector that interacts with and inhibits host apoplastic pathogenesis-related papain-like cysteine proteases. Inhibition of host proteases by a pathogen extracellular protease inhibitor forms a specific type of defense-counterdefense mechanism between plants and microbial pathogens. This chain is Cystatin-like cysteine protease inhibitor EPIC4, found in Phytophthora infestans (Potato late blight agent).